A 325-amino-acid polypeptide reads, in one-letter code: D-alanine--D-alanine ligase (325 aa).

Residues Lys-102 to Gln-300 form the ATP-grasp domain. Ala-130–Thr-185 lines the ATP pocket. Mg(2+) is bound by residues Asp-254, Glu-267, and Asn-269.

This sequence belongs to the D-alanine--D-alanine ligase family. Mg(2+) is required as a cofactor. Requires Mn(2+) as cofactor.

Its subcellular location is the cytoplasm. The catalysed reaction is 2 D-alanine + ATP = D-alanyl-D-alanine + ADP + phosphate + H(+). It participates in cell wall biogenesis; peptidoglycan biosynthesis. Functionally, cell wall formation. This chain is D-alanine--D-alanine ligase, found in Synechococcus sp. (strain JA-2-3B'a(2-13)) (Cyanobacteria bacterium Yellowstone B-Prime).